Here is a 344-residue protein sequence, read N- to C-terminus: Dihydroorotase (344 aa).

Zn(2+)-binding residues include His-14 and His-16. Residues 16–18 (HLR) and Asn-42 each bind substrate. Lys-100, His-137, and His-175 together coordinate Zn(2+). Lys-100 carries the post-translational modification N6-carboxylysine. His-137 lines the substrate pocket. Leu-220 serves as a coordination point for substrate. Asp-248 lines the Zn(2+) pocket. Residue Asp-248 is part of the active site. Positions 252 and 264 each coordinate substrate.

The protein belongs to the metallo-dependent hydrolases superfamily. DHOase family. Class II DHOase subfamily. Homodimer. Zn(2+) serves as cofactor.

It carries out the reaction (S)-dihydroorotate + H2O = N-carbamoyl-L-aspartate + H(+). Its pathway is pyrimidine metabolism; UMP biosynthesis via de novo pathway; (S)-dihydroorotate from bicarbonate: step 3/3. In terms of biological role, catalyzes the reversible cyclization of carbamoyl aspartate to dihydroorotate. This chain is Dihydroorotase, found in Cupriavidus necator (strain ATCC 17699 / DSM 428 / KCTC 22496 / NCIMB 10442 / H16 / Stanier 337) (Ralstonia eutropha).